The sequence spans 358 residues: PDZ and LIM domain protein 3 (358 aa).

Residues 1 to 84 enclose the PDZ domain; sequence MPQNVLLPGP…QLCLKIDRAE (84 aa). 2 disordered regions span residues 126–155 and 237–274; these read FILP…SVST and DTEH…RAPV. Residues 129–146 show a composition bias toward low complexity; sequence PGRSSGSSTPSGFDPGSG. The LIM zinc-binding domain occupies 288-347; sequence PICDRCGNGIVGTVVKAKDKLRHPDCFVCSDCNLNLKQKGYFFVEGQLYCEAHARARMRP.

It localises to the cytoplasm. The protein localises to the myofibril. Its subcellular location is the sarcomere. It is found in the z line. Functionally, may play a role in the organization of actin filament arrays within muscle cells. The protein is PDZ and LIM domain protein 3 (pdlim3) of Xenopus laevis (African clawed frog).